The following is a 1225-amino-acid chain: DNA-directed RNA polymerase subunit beta' (1225 aa).

Zn(2+) contacts are provided by Cys-60, Cys-62, Cys-75, and Cys-78. Positions 450, 452, and 454 each coordinate Mg(2+). 4 residues coordinate Zn(2+): Cys-818, Cys-892, Cys-899, and Cys-902.

Belongs to the RNA polymerase beta' chain family. As to quaternary structure, the RNAP catalytic core consists of 2 alpha, 1 beta, 1 beta' and 1 omega subunit. When a sigma factor is associated with the core the holoenzyme is formed, which can initiate transcription. Mg(2+) serves as cofactor. It depends on Zn(2+) as a cofactor.

It catalyses the reaction RNA(n) + a ribonucleoside 5'-triphosphate = RNA(n+1) + diphosphate. DNA-dependent RNA polymerase catalyzes the transcription of DNA into RNA using the four ribonucleoside triphosphates as substrates. In Streptococcus pneumoniae (strain P1031), this protein is DNA-directed RNA polymerase subunit beta'.